The sequence spans 361 residues: Anthranilate phosphoribosyltransferase (361 aa).

5-phospho-alpha-D-ribose 1-diphosphate-binding positions include glycine 80, 83–84, threonine 88, 90–93, 108–116, and serine 120; these read GD, NVST, and KHGNYSVSS. Residue glycine 80 participates in anthranilate binding. Serine 92 contacts Mg(2+). Position 111 (asparagine 111) interacts with anthranilate. Arginine 166 contributes to the anthranilate binding site. Mg(2+) contacts are provided by aspartate 224 and glutamate 225. A disordered region spans residues 338 to 361; sequence EGDGEAASTDSAAASTTAGPEDDD. Residues 343–355 are compositionally biased toward low complexity; it reads AASTDSAAASTTA.

The protein belongs to the anthranilate phosphoribosyltransferase family. Homodimer. Mg(2+) serves as cofactor.

It catalyses the reaction N-(5-phospho-beta-D-ribosyl)anthranilate + diphosphate = 5-phospho-alpha-D-ribose 1-diphosphate + anthranilate. It participates in amino-acid biosynthesis; L-tryptophan biosynthesis; L-tryptophan from chorismate: step 2/5. Its function is as follows. Catalyzes the transfer of the phosphoribosyl group of 5-phosphorylribose-1-pyrophosphate (PRPP) to anthranilate to yield N-(5'-phosphoribosyl)-anthranilate (PRA). In Halorubrum lacusprofundi (strain ATCC 49239 / DSM 5036 / JCM 8891 / ACAM 34), this protein is Anthranilate phosphoribosyltransferase.